The sequence spans 229 residues: Ribosome maturation factor RimM (229 aa).

A disordered region spans residues methionine 1–valine 21. One can recognise a PRC barrel domain in the interval alanine 148 to tyrosine 229.

Belongs to the RimM family. In terms of assembly, binds ribosomal protein uS19.

Its subcellular location is the cytoplasm. In terms of biological role, an accessory protein needed during the final step in the assembly of 30S ribosomal subunit, possibly for assembly of the head region. Essential for efficient processing of 16S rRNA. May be needed both before and after RbfA during the maturation of 16S rRNA. It has affinity for free ribosomal 30S subunits but not for 70S ribosomes. The chain is Ribosome maturation factor RimM from Burkholderia pseudomallei (strain 1106a).